The chain runs to 60 residues: Large ribosomal subunit protein uL30 (60 aa).

Belongs to the universal ribosomal protein uL30 family. As to quaternary structure, part of the 50S ribosomal subunit.

The protein is Large ribosomal subunit protein uL30 of Streptomyces griseus subsp. griseus (strain JCM 4626 / CBS 651.72 / NBRC 13350 / KCC S-0626 / ISP 5235).